The following is a 161-amino-acid chain: Nucleotide-binding protein Gbem_0619 (161 aa).

This sequence belongs to the YajQ family.

Its function is as follows. Nucleotide-binding protein. The protein is Nucleotide-binding protein Gbem_0619 of Citrifermentans bemidjiense (strain ATCC BAA-1014 / DSM 16622 / JCM 12645 / Bem) (Geobacter bemidjiensis).